The following is a 307-amino-acid chain: Olfactory receptor 5AC1 (307 aa).

Residues 1–28 (MAEENKILVTHFVLTGLTDHPGLQAPLF) are Extracellular-facing. A helical membrane pass occupies residues 29 to 49 (LVFLVIYLITLVGNLGLMALI). The Cytoplasmic segment spans residues 50 to 56 (WKDPHLH). The chain crosses the membrane as a helical span at residues 57-77 (TPIYLFLGSLAFADACTSSSV). The Extracellular segment spans residues 78–99 (TSKMLINFLSKNHMLSMAKCAT). Cysteine 97 and cysteine 179 are disulfide-bonded. Residues 100-120 (QFYFFGSNATTECFLLVVMAY) traverse the membrane as a helical segment. Topologically, residues 121-143 (DRYVAICNPLLYPVVMSNSLCTQ) are cytoplasmic. A helical membrane pass occupies residues 144-164 (FIGISYFIGFLHSAIHVGLLF). Residues 165 to 195 (RLTFCRSNIIHYFYCEILQLFKISCTNPTVN) lie on the Extracellular side of the membrane. Residues 196 to 216 (ILLIFIFSAFIQVFTFMTLIV) form a helical membrane-spanning segment. Topologically, residues 217-239 (SYSYILSAILKKKSEKGRSKAFS) are cytoplasmic. The helical transmembrane segment at 240–260 (TCSAHLLSVSLFYGTLFFMYV) threads the bilayer. Over 261–271 (SSRSGSAADQA) the chain is Extracellular. The helical transmembrane segment at 272–292 (KMYSLFYTIIIPLLNPFIYSL) threads the bilayer. Over 293-307 (RNKEVIDALRRIMKK) the chain is Cytoplasmic.

This sequence belongs to the G-protein coupled receptor 1 family.

It localises to the cell membrane. Its function is as follows. Odorant receptor. The chain is Olfactory receptor 5AC1 (OR5AC1) from Homo sapiens (Human).